Reading from the N-terminus, the 129-residue chain is Transcription antitermination protein NusB (129 aa).

Belongs to the NusB family.

Involved in transcription antitermination. Required for transcription of ribosomal RNA (rRNA) genes. Binds specifically to the boxA antiterminator sequence of the ribosomal RNA (rrn) operons. The polypeptide is Transcription antitermination protein NusB (Staphylococcus aureus (strain MRSA252)).